Here is a 350-residue protein sequence, read N- to C-terminus: 4-hydroxy-3-methylbut-2-enyl diphosphate reductase (350 aa).

Residue C36 coordinates [4Fe-4S] cluster. Positions 65 and 101 each coordinate (2E)-4-hydroxy-3-methylbut-2-enyl diphosphate. Positions 65 and 101 each coordinate dimethylallyl diphosphate. H65 and H101 together coordinate isopentenyl diphosphate. C123 is a [4Fe-4S] cluster binding site. Residue H151 participates in (2E)-4-hydroxy-3-methylbut-2-enyl diphosphate binding. H151 provides a ligand contact to dimethylallyl diphosphate. Residue H151 participates in isopentenyl diphosphate binding. E153 (proton donor) is an active-site residue. A (2E)-4-hydroxy-3-methylbut-2-enyl diphosphate-binding site is contributed by T192. C222 serves as a coordination point for [4Fe-4S] cluster. S250, S251, N252, and S295 together coordinate (2E)-4-hydroxy-3-methylbut-2-enyl diphosphate. Residues S250, S251, N252, and S295 each coordinate dimethylallyl diphosphate. The isopentenyl diphosphate site is built by S250, S251, N252, and S295.

The protein belongs to the IspH family. [4Fe-4S] cluster serves as cofactor.

The catalysed reaction is isopentenyl diphosphate + 2 oxidized [2Fe-2S]-[ferredoxin] + H2O = (2E)-4-hydroxy-3-methylbut-2-enyl diphosphate + 2 reduced [2Fe-2S]-[ferredoxin] + 2 H(+). The enzyme catalyses dimethylallyl diphosphate + 2 oxidized [2Fe-2S]-[ferredoxin] + H2O = (2E)-4-hydroxy-3-methylbut-2-enyl diphosphate + 2 reduced [2Fe-2S]-[ferredoxin] + 2 H(+). The protein operates within isoprenoid biosynthesis; dimethylallyl diphosphate biosynthesis; dimethylallyl diphosphate from (2E)-4-hydroxy-3-methylbutenyl diphosphate: step 1/1. It participates in isoprenoid biosynthesis; isopentenyl diphosphate biosynthesis via DXP pathway; isopentenyl diphosphate from 1-deoxy-D-xylulose 5-phosphate: step 6/6. Its function is as follows. Catalyzes the conversion of 1-hydroxy-2-methyl-2-(E)-butenyl 4-diphosphate (HMBPP) into a mixture of isopentenyl diphosphate (IPP) and dimethylallyl diphosphate (DMAPP). Acts in the terminal step of the DOXP/MEP pathway for isoprenoid precursor biosynthesis. The protein is 4-hydroxy-3-methylbut-2-enyl diphosphate reductase of Rhizobium meliloti (strain 1021) (Ensifer meliloti).